The following is a 55-amino-acid chain: Histone H1 (55 aa).

The span at 1-15 (MAEVAPAPAAAAPAK) shows a compositional bias: low complexity. Residues 1–28 (MAEVAPAPAAAAPAKAPKKKAAAKPKKA) form a disordered region. Residue A2 is modified to N-acetylalanine. The segment covering 16–27 (APKKKAAAKPKK) has biased composition (basic residues). One can recognise an H15 domain in the interval 28 to 55 (AGPSVGELIVKAVSASKERSGVSLAALK).

This sequence belongs to the histone H1/H5 family.

Its subcellular location is the nucleus. It is found in the chromosome. The protein resides in the secreted. Functionally, histones H1 are necessary for the condensation of nucleosome chains into higher-order structures. In terms of biological role, SAMP H1 has antibacterial activity against Gram-negative bacteria E.coli, A.salmonicida subsp salmonicida, V.anguillarum and S.typhimurium and Gram-positive bacteria B.subtilis and L.ivanovii. The protein is Histone H1 of Salmo salar (Atlantic salmon).